A 272-amino-acid chain; its full sequence is HTH-type transcriptional repressor AllR (272 aa).

The segment at 1-20 is disordered; that stretch reads MTEVRRRGRPGQAEPTAQKG. Residues 21-83 form the HTH iclR-type domain; sequence AQALERGIAI…SQLGWWHIGL (63 aa). A DNA-binding region (H-T-H motif) is located at residues 43–62; the sequence is VSDISGSLDLPLSTTFRLLK. One can recognise an IclR-ED domain in the interval 98-267; that stretch reads VLSVAGPFMH…AKDISTALGL (170 aa). Glyoxylate contacts are provided by residues 154–156, Asp-207, Cys-217, and 234–236; these read SGA and SIS.

Its function is as follows. Negative regulator of allantoin and glyoxylate utilization operons. Binds to the gcl promoter and to the allS-allA intergenic region. This Salmonella paratyphi A (strain ATCC 9150 / SARB42) protein is HTH-type transcriptional repressor AllR (allR).